Consider the following 417-residue polypeptide: Queuine tRNA-ribosyltransferase accessory subunit 2 (417 aa).

Zn(2+)-binding residues include Cys324, Cys326, Cys329, and His355.

This sequence belongs to the queuine tRNA-ribosyltransferase family. QTRT2 subfamily. Heterodimer of a catalytic subunit and an accessory subunit. Requires Zn(2+) as cofactor.

The protein localises to the cytoplasm. Functionally, non-catalytic subunit of the queuine tRNA-ribosyltransferase (TGT) that catalyzes the base-exchange of a guanine (G) residue with queuine (Q) at position 34 (anticodon wobble position) in tRNAs with GU(N) anticodons (tRNA-Asp, -Asn, -His and -Tyr), resulting in the hypermodified nucleoside queuosine (7-(((4,5-cis-dihydroxy-2-cyclopenten-1-yl)amino)methyl)-7-deazaguanosine). The sequence is that of Queuine tRNA-ribosyltransferase accessory subunit 2 from Drosophila pseudoobscura pseudoobscura (Fruit fly).